The sequence spans 409 residues: 3-dehydro-bile acid delta(4,6)-reductase (409 aa).

The FAD site is built by Ser12, Glu33, Val131, Glu378, Asn390, and Leu391.

It belongs to the BaiN/RdsA family. BaiN subfamily. The cofactor is FAD.

It catalyses the reaction 3-oxocholan-24-oyl-CoA + NAD(+) = 3-oxochol-4-en-24-oyl-CoA + NADH + H(+). It carries out the reaction 3-oxochol-4-en-24-oyl-CoA + NAD(+) = 3-oxochol-4,6-dien-24-oyl-CoA + NADH + H(+). The enzyme catalyses 12alpha-hydroxy-3-oxocholan-24-oyl-CoA + NAD(+) = 12alpha-hydroxy-3-oxochol-4-en-24-oyl-CoA + NADH + H(+). The catalysed reaction is 12alpha-hydroxy-3-oxochol-4-en-24-oyl-CoA + NAD(+) = 12alpha-hydroxy-3-oxochola-4,6-dien-24-oyl-CoA + NADH + H(+). It participates in lipid metabolism; bile acid degradation. In terms of biological role, involved in the secondary bile acid metabolism. Catalyzes two subsequent reductions of the double bonds within the bile acid A/B rings of 3-oxochol-4,6-dien-24-oyl-CoA and 12alpha-hydroxy-3-oxochol-4,6-dien-24-oyl-CoA to yield 3-oxocholan-24-oyl-CoA and 12alpha-hydroxy-3-oxocholan-24-oyl-CoA, respectively. This Clostridium scindens (strain ATCC 35704 / DSM 5676 / VPI 13733 / 19) protein is 3-dehydro-bile acid delta(4,6)-reductase.